The primary structure comprises 269 residues: Formamidopyrimidine-DNA glycosylase (269 aa).

Pro-2 serves as the catalytic Schiff-base intermediate with DNA. The Proton donor role is filled by Glu-3. The active-site Proton donor; for beta-elimination activity is Lys-57. DNA contacts are provided by His-90, Arg-109, and Arg-150. An FPG-type zinc finger spans residues 235 to 269 (NVYGRAGQPCVQCDAILKADRHGQRSTAYCPQCQR). Residue Arg-259 is the Proton donor; for delta-elimination activity of the active site.

It belongs to the FPG family. As to quaternary structure, monomer. Zn(2+) is required as a cofactor.

It carries out the reaction Hydrolysis of DNA containing ring-opened 7-methylguanine residues, releasing 2,6-diamino-4-hydroxy-5-(N-methyl)formamidopyrimidine.. It catalyses the reaction 2'-deoxyribonucleotide-(2'-deoxyribose 5'-phosphate)-2'-deoxyribonucleotide-DNA = a 3'-end 2'-deoxyribonucleotide-(2,3-dehydro-2,3-deoxyribose 5'-phosphate)-DNA + a 5'-end 5'-phospho-2'-deoxyribonucleoside-DNA + H(+). In terms of biological role, involved in base excision repair of DNA damaged by oxidation or by mutagenic agents. Acts as a DNA glycosylase that recognizes and removes damaged bases. Has a preference for oxidized purines, such as 7,8-dihydro-8-oxoguanine (8-oxoG). Has AP (apurinic/apyrimidinic) lyase activity and introduces nicks in the DNA strand. Cleaves the DNA backbone by beta-delta elimination to generate a single-strand break at the site of the removed base with both 3'- and 5'-phosphates. The protein is Formamidopyrimidine-DNA glycosylase of Alcanivorax borkumensis (strain ATCC 700651 / DSM 11573 / NCIMB 13689 / SK2).